Reading from the N-terminus, the 653-residue chain is Translation factor GUF1, mitochondrial (653 aa).

Positions 56-236 (ENYRNFSIVA…SIIKNIPAPN (181 aa)) constitute a tr-type G domain. GTP-binding positions include 65–72 (AHVDHGKS), 129–133 (DTPGH), and 183–186 (NKID).

Belongs to the TRAFAC class translation factor GTPase superfamily. Classic translation factor GTPase family. LepA subfamily.

It is found in the mitochondrion inner membrane. It catalyses the reaction GTP + H2O = GDP + phosphate + H(+). Promotes mitochondrial protein synthesis. May act as a fidelity factor of the translation reaction, by catalyzing a one-codon backward translocation of tRNAs on improperly translocated ribosomes. Binds to mitochondrial ribosomes in a GTP-dependent manner. This is Translation factor GUF1, mitochondrial from Candida tropicalis (strain ATCC MYA-3404 / T1) (Yeast).